The sequence spans 29 residues: Cytochrome b6-f complex subunit 8 (29 aa).

A helical membrane pass occupies residues 3–23 (TVSLAWAALMVVFTFSLSLVV).

It belongs to the PetN family. The 4 large subunits of the cytochrome b6-f complex are cytochrome b6, subunit IV (17 kDa polypeptide, PetD), cytochrome f and the Rieske protein, while the 4 small subunits are PetG, PetL, PetM and PetN. The complex functions as a dimer.

It localises to the plastid. Its subcellular location is the chloroplast thylakoid membrane. Component of the cytochrome b6-f complex, which mediates electron transfer between photosystem II (PSII) and photosystem I (PSI), cyclic electron flow around PSI, and state transitions. The protein is Cytochrome b6-f complex subunit 8 of Chloranthus spicatus (Chulantree).